Here is a 353-residue protein sequence, read N- to C-terminus: MASSWPPLELQSSNQSQLFPQNATACDNAPEAWDLLHRVLPTFIISICFFGLLGNLFVLLVFLLPRRQLNVAEIYLANLAASDLVFVLGLPFWAENIWNQFNWPFGALLCRVINGVIKANLFISIFLVVAISQDRYRVLVHPMASRRQQRRRQARVTCVLIWVVGGLLSIPTFLLRSIQAVPDLNITACILLLPHEAWHFARIVELNILGFLLPLAAIVFFNYHILASLRTREEVSRTRCGGRKDSKTTALILTLVVAFLVCWAPYHFFAFLEFLFQVQAVRGCFWEDFIDLGLQLANFFAFTNSSLNPVIYVFVGRLFRTKVWELYKQCTPKSLAPISSSHRKEIFQLFWRN.

At 1–40 (MASSWPPLELQSSNQSQLFPQNATACDNAPEAWDLLHRVL) the chain is on the extracellular side. 2 N-linked (GlcNAc...) asparagine glycosylation sites follow: asparagine 14 and asparagine 22. The helical transmembrane segment at 41–64 (PTFIISICFFGLLGNLFVLLVFLL) threads the bilayer. The Cytoplasmic portion of the chain corresponds to 65–73 (PRRQLNVAE). A helical transmembrane segment spans residues 74 to 98 (IYLANLAASDLVFVLGLPFWAENIW). Over 99 to 111 (NQFNWPFGALLCR) the chain is Extracellular. A disulfide bridge connects residues cysteine 110 and cysteine 189. The helical transmembrane segment at 112-133 (VINGVIKANLFISIFLVVAISQ) threads the bilayer. Residues 134–155 (DRYRVLVHPMASRRQQRRRQAR) lie on the Cytoplasmic side of the membrane. A helical transmembrane segment spans residues 156-178 (VTCVLIWVVGGLLSIPTFLLRSI). Topologically, residues 179–199 (QAVPDLNITACILLLPHEAWH) are extracellular. N-linked (GlcNAc...) asparagine glycosylation occurs at asparagine 185. Residues 200-226 (FARIVELNILGFLLPLAAIVFFNYHIL) traverse the membrane as a helical segment. At 227–247 (ASLRTREEVSRTRCGGRKDSK) the chain is on the cytoplasmic side. Residues 248–272 (TTALILTLVVAFLVCWAPYHFFAFL) traverse the membrane as a helical segment. Residues 273–291 (EFLFQVQAVRGCFWEDFID) are Extracellular-facing. The helical transmembrane segment at 292 to 314 (LGLQLANFFAFTNSSLNPVIYVF) threads the bilayer. Residues 315–353 (VGRLFRTKVWELYKQCTPKSLAPISSSHRKEIFQLFWRN) are Cytoplasmic-facing. Cysteine 330 is lipidated: S-palmitoyl cysteine.

This sequence belongs to the G-protein coupled receptor 1 family. Bradykinin receptor subfamily. BDKRB1 sub-subfamily.

It localises to the cell membrane. This is a receptor for bradykinin. Could be a factor in chronic pain and inflammation. The polypeptide is B1 bradykinin receptor (BDKRB1) (Homo sapiens (Human)).